Reading from the N-terminus, the 107-residue chain is L-rhamnose mutarotase (107 aa).

Position 18 (tyrosine 18) interacts with substrate. Catalysis depends on histidine 22, which acts as the Proton donor. Residues tyrosine 41 and 76-77 (WW) each bind substrate.

Belongs to the rhamnose mutarotase family. In terms of assembly, homodimer.

It is found in the cytoplasm. The catalysed reaction is alpha-L-rhamnose = beta-L-rhamnose. The protein operates within carbohydrate metabolism; L-rhamnose metabolism. Involved in the anomeric conversion of L-rhamnose. The chain is L-rhamnose mutarotase from Paraburkholderia phytofirmans (strain DSM 17436 / LMG 22146 / PsJN) (Burkholderia phytofirmans).